Consider the following 70-residue polypeptide: Large ribosomal subunit protein bL31c (70 aa).

This sequence belongs to the bacterial ribosomal protein bL31 family. Type A subfamily. Part of the 50S ribosomal subunit.

The protein localises to the plastid. The protein resides in the chloroplast. Binds the 23S rRNA. This Emiliania huxleyi (Coccolithophore) protein is Large ribosomal subunit protein bL31c.